The sequence spans 1284 residues: Neurexin-4 (1284 aa).

Residues 1 to 35 (MRPPRSNTKAAFSSLQFGLLCLLLLVNNGIKSVQA) form the signal peptide. Residues 36–1217 (DAFTDYFSDY…LRKAYNEVDS (1182 aa)) lie on the Extracellular side of the membrane. The F5/8 type C domain occupies 47–185 (CNQPLMERAV…ISMRVELYGC (139 aa)). Cysteine 47 and cysteine 185 are joined by a disulfide. 4 N-linked (GlcNAc...) asparagine glycosylation sites follow: asparagine 195, asparagine 329, asparagine 340, and asparagine 398. Residues 220–369 (FKTAFANGVM…FTRVNTIYAC (150 aa)) enclose the Laminin G-like 1 domain. Cysteines 333 and 369 form a disulfide. The 138-residue stretch at 403–540 (FRTYEETGVM…CGDDVVVDAC (138 aa)) folds into the Laminin G-like 2 domain. 4 cysteine pairs are disulfide-bonded: cysteine 507/cysteine 540, cysteine 546/cysteine 557, cysteine 551/cysteine 566, and cysteine 568/cysteine 578. The EGF-like 1 domain occupies 542–579 (MIDRCNPNPCQHKGLCHQNSREFFCDCGHTGYAGAVCH). Residue asparagine 668 is glycosylated (N-linked (GlcNAc...) asparagine). One can recognise a Laminin G-like 3 domain in the interval 824 to 962 (FRTTQENSVI…RGLYGISTGC (139 aa)). Intrachain disulfides connect cysteine 934-cysteine 962, cysteine 966-cysteine 977, cysteine 971-cysteine 986, and cysteine 988-cysteine 998. Positions 962–999 (CVGRCESNPCLNNGTCIERYDGYSCDCRWSAFKGPICA) constitute an EGF-like 2 domain. Residue asparagine 974 is glycosylated (N-linked (GlcNAc...) asparagine). The Laminin G-like 4 domain maps to 1032–1183 (FTTTIPKGFL…LGTQLTEDFC (152 aa)). 2 N-linked (GlcNAc...) asparagine glycosylation sites follow: asparagine 1047 and asparagine 1137. The cysteines at positions 1147 and 1183 are disulfide-linked. The chain crosses the membrane as a helical span at residues 1218–1238 (VLLACLLVILFLLLILMFFLI). The Cytoplasmic segment spans residues 1239–1284 (GRYLHRHKGDYLTHEDQGADGADDPDDAVLHSTTGHQVRKRTEIFI).

The protein belongs to the neurexin family. In terms of assembly, forms a complex with Nrg and Cont. Forms a complex composed of septa junction proteins Nrx-IV/Nrx, Tsf2/MTf, Cont and Nrg during late embryogenesis. The C-terminal region interacts with coracle. Interacts with Patj in cis form. In terms of tissue distribution, found in septate junctions of epithelial and glial cells.

It localises to the cell membrane. The protein resides in the cell junction. It is found in the septate junction. In terms of biological role, seems to play a role in the formation and function of septate junctions. Septate junctions, which are the equivalent of vertebrates tight junctions, are characterized by regular arrays of transverse structures that span the intermembrane space and form a physical barrier to diffusion. Required for the blood-brain barrier formation. The chain is Neurexin-4 (Nrx-IV) from Drosophila melanogaster (Fruit fly).